Here is a 307-residue protein sequence, read N- to C-terminus: MNDSVLPLGHLMVFDALYRHGSAGKAAHALSMPQPTLSRWLAQLRTHFDDPLFVRTRSGMEPTPLAARAAPHIAEMIAIYRQHVRSELRFDPGTSNRNFRIAASDFGQALMLPRLYATLEETAPQVRVTGVNLRHGPLVEELESGSIDIAFGGFPTLSAGIKTQTLFREEYVCVMRQSHPALTHGLDLEAFRQCRHIIVTAHEFNHVHEQVEARLLELLPPESIRFTTENFLVSAVIAEETDVILTIPSRLARWFANRGGLTIFPVPIELPSIEVKQYWHERYDKDPGNIWLRRVIAKIGFQNPPAE.

The HTH lysR-type domain maps to 6–63 (LPLGHLMVFDALYRHGSAGKAAHALSMPQPTLSRWLAQLRTHFDDPLFVRTRSGMEPT). A DNA-binding region (H-T-H motif) is located at residues 23–42 (AGKAAHALSMPQPTLSRWLA).

It belongs to the LysR transcriptional regulatory family.

In terms of biological role, transcriptional activator for the pcpA, pcpB and pcpE genes for pentachlorophenol (PCP) degradation. Essential for PCP degradation. This Sphingobium chlorophenolicum protein is PCP degradation transcriptional activation protein (pcpR).